The primary structure comprises 491 residues: Probable glycine dehydrogenase (decarboxylating) subunit 2 (491 aa).

An N6-(pyridoxal phosphate)lysine modification is found at lysine 273.

It belongs to the GcvP family. C-terminal subunit subfamily. In terms of assembly, the glycine cleavage system is composed of four proteins: P, T, L and H. In this organism, the P 'protein' is a heterodimer of two subunits. Pyridoxal 5'-phosphate serves as cofactor.

The enzyme catalyses N(6)-[(R)-lipoyl]-L-lysyl-[glycine-cleavage complex H protein] + glycine + H(+) = N(6)-[(R)-S(8)-aminomethyldihydrolipoyl]-L-lysyl-[glycine-cleavage complex H protein] + CO2. In terms of biological role, the glycine cleavage system catalyzes the degradation of glycine. The P protein binds the alpha-amino group of glycine through its pyridoxal phosphate cofactor; CO(2) is released and the remaining methylamine moiety is then transferred to the lipoamide cofactor of the H protein. This is Probable glycine dehydrogenase (decarboxylating) subunit 2 from Bacillus thuringiensis (strain Al Hakam).